A 177-amino-acid polypeptide reads, in one-letter code: Adenine phosphoribosyltransferase (177 aa).

This sequence belongs to the purine/pyrimidine phosphoribosyltransferase family. In terms of assembly, homodimer.

It is found in the cytoplasm. It carries out the reaction AMP + diphosphate = 5-phospho-alpha-D-ribose 1-diphosphate + adenine. It functions in the pathway purine metabolism; AMP biosynthesis via salvage pathway; AMP from adenine: step 1/1. Functionally, catalyzes a salvage reaction resulting in the formation of AMP, that is energically less costly than de novo synthesis. The sequence is that of Adenine phosphoribosyltransferase from Chlorobium chlorochromatii (strain CaD3).